Consider the following 835-residue polypeptide: Probable alpha-glucuronidase A (835 aa).

An N-terminal signal peptide occupies residues Met-1–Ala-18. N-linked (GlcNAc...) asparagine glycans are attached at residues Asn-49, Asn-101, Asn-148, Asn-221, Asn-278, Asn-309, Asn-342, Asn-460, Asn-522, Asn-571, Asn-677, and Asn-727.

It belongs to the glycosyl hydrolase 67 family.

It localises to the secreted. The catalysed reaction is an alpha-D-glucuronoside + H2O = D-glucuronate + an alcohol. Its function is as follows. Alpha-glucuronidase involved in the hydrolysis of xylan, a major structural heterogeneous polysaccharide found in plant biomass representing the second most abundant polysaccharide in the biosphere, after cellulose. Releases 4-O-methylglucuronic acid from xylan. This chain is Probable alpha-glucuronidase A (aguA), found in Aspergillus oryzae (strain ATCC 42149 / RIB 40) (Yellow koji mold).